The primary structure comprises 547 residues: Chaperonin GroEL 1 (547 aa).

ATP-binding positions include 30–33 (TLGP), K51, 87–91 (DGTTT), G415, and D496. The interval 525–547 (KPEPKSPAGGPGMGGMGGMDGMM) is disordered. Residues 533–547 (GGPGMGGMGGMDGMM) are compositionally biased toward gly residues.

It belongs to the chaperonin (HSP60) family. In terms of assembly, forms a cylinder of 14 subunits composed of two heptameric rings stacked back-to-back. Interacts with the co-chaperonin GroES.

The protein localises to the cytoplasm. It carries out the reaction ATP + H2O + a folded polypeptide = ADP + phosphate + an unfolded polypeptide.. Functionally, together with its co-chaperonin GroES, plays an essential role in assisting protein folding. The GroEL-GroES system forms a nano-cage that allows encapsulation of the non-native substrate proteins and provides a physical environment optimized to promote and accelerate protein folding. The polypeptide is Chaperonin GroEL 1 (Cereibacter sphaeroides (strain ATCC 17023 / DSM 158 / JCM 6121 / CCUG 31486 / LMG 2827 / NBRC 12203 / NCIMB 8253 / ATH 2.4.1.) (Rhodobacter sphaeroides)).